The sequence spans 214 residues: Acetoin utilization protein AcuB (214 aa).

CBS domains are found at residues 7–66 (MKRD…ENKR) and 78–135 (MKKD…GADQ).

Interacts with YabA.

The protein operates within ketone degradation; acetoin degradation. Functionally, role in growth and sporulation on acetoin or butanediol. Involved in the breakdown of these compounds used as a carbon source. The protein is Acetoin utilization protein AcuB (acuB) of Bacillus subtilis (strain 168).